The sequence spans 267 residues: Ubiquinone biosynthesis protein COQ4 homolog, mitochondrial (267 aa).

Positions 170, 171, 174, and 186 each coordinate Zn(2+).

This sequence belongs to the COQ4 family. As to quaternary structure, component of a multi-subunit COQ enzyme complex. Zn(2+) serves as cofactor.

It localises to the mitochondrion inner membrane. It carries out the reaction a 4-hydroxy-3-methoxy-5-(all-trans-polyprenyl)benzoate + H(+) = a 2-methoxy-6-(all-trans-polyprenyl)phenol + CO2. The protein operates within cofactor biosynthesis; ubiquinone biosynthesis. Functionally, lyase that catalyzes the C1-decarboxylation of 4-hydroxy-3-methoxy-5-(all-trans-polyprenyl)benzoic acid into 2-methoxy-6-(all-trans-polyprenyl)phenol during ubiquinone biosynthesis. The polypeptide is Ubiquinone biosynthesis protein COQ4 homolog, mitochondrial (Drosophila pseudoobscura pseudoobscura (Fruit fly)).